The chain runs to 256 residues: Small ribosomal subunit protein eS1B (256 aa).

Residue A2 is modified to N-acetylalanine; partial.

Belongs to the eukaryotic ribosomal protein eS1 family. As to quaternary structure, component of the small ribosomal subunit. Mature ribosomes consist of a small (40S) and a large (60S) subunit. The 40S subunit contains about 33 different proteins and 1 molecule of RNA (18S). The 60S subunit contains about 49 different proteins and 3 molecules of RNA (25S, 5.8S and 5S).

The protein localises to the cytoplasm. The protein is Small ribosomal subunit protein eS1B of Scheffersomyces stipitis (strain ATCC 58785 / CBS 6054 / NBRC 10063 / NRRL Y-11545) (Yeast).